Here is a 303-residue protein sequence, read N- to C-terminus: UDP-3-O-acyl-N-acetylglucosamine deacetylase (303 aa).

Residues His78, His237, and Asp241 each coordinate Zn(2+). Residue His264 is the Proton donor of the active site.

This sequence belongs to the LpxC family. The cofactor is Zn(2+).

It catalyses the reaction a UDP-3-O-[(3R)-3-hydroxyacyl]-N-acetyl-alpha-D-glucosamine + H2O = a UDP-3-O-[(3R)-3-hydroxyacyl]-alpha-D-glucosamine + acetate. It functions in the pathway glycolipid biosynthesis; lipid IV(A) biosynthesis; lipid IV(A) from (3R)-3-hydroxytetradecanoyl-[acyl-carrier-protein] and UDP-N-acetyl-alpha-D-glucosamine: step 2/6. Catalyzes the hydrolysis of UDP-3-O-myristoyl-N-acetylglucosamine to form UDP-3-O-myristoylglucosamine and acetate, the committed step in lipid A biosynthesis. This is UDP-3-O-acyl-N-acetylglucosamine deacetylase from Pseudomonas savastanoi pv. phaseolicola (strain 1448A / Race 6) (Pseudomonas syringae pv. phaseolicola (strain 1448A / Race 6)).